A 274-amino-acid chain; its full sequence is 2,3,4,5-tetrahydropyridine-2,6-dicarboxylate N-succinyltransferase (274 aa).

Substrate contacts are provided by Arg-104 and Asp-141.

It belongs to the transferase hexapeptide repeat family. Homotrimer.

It is found in the cytoplasm. It catalyses the reaction (S)-2,3,4,5-tetrahydrodipicolinate + succinyl-CoA + H2O = (S)-2-succinylamino-6-oxoheptanedioate + CoA. It participates in amino-acid biosynthesis; L-lysine biosynthesis via DAP pathway; LL-2,6-diaminopimelate from (S)-tetrahydrodipicolinate (succinylase route): step 1/3. In Shewanella pealeana (strain ATCC 700345 / ANG-SQ1), this protein is 2,3,4,5-tetrahydropyridine-2,6-dicarboxylate N-succinyltransferase.